The following is a 306-amino-acid chain: Ornithine carbamoyltransferase (306 aa).

Residues 51–54, Gln78, Arg102, and 129–132 each bind carbamoyl phosphate; these read STRT and HPCQ. Residues Asn160, Asp223, and 227-228 contribute to the L-ornithine site; that span reads SM. Carbamoyl phosphate contacts are provided by residues 263–264 and Arg291; that span reads CL.

It belongs to the aspartate/ornithine carbamoyltransferase superfamily. OTCase family.

The protein localises to the cytoplasm. It carries out the reaction carbamoyl phosphate + L-ornithine = L-citrulline + phosphate + H(+). Its pathway is amino-acid biosynthesis; L-arginine biosynthesis; L-arginine from L-ornithine and carbamoyl phosphate: step 1/3. Functionally, reversibly catalyzes the transfer of the carbamoyl group from carbamoyl phosphate (CP) to the N(epsilon) atom of ornithine (ORN) to produce L-citrulline. The sequence is that of Ornithine carbamoyltransferase (argF) from Nostoc punctiforme (strain ATCC 29133 / PCC 73102).